Consider the following 121-residue polypeptide: UPF0102 protein DSY2577 (121 aa).

The protein belongs to the UPF0102 family.

In Desulfitobacterium hafniense (strain Y51), this protein is UPF0102 protein DSY2577.